A 344-amino-acid chain; its full sequence is N-acetyl-gamma-glutamyl-phosphate reductase (344 aa).

Residue Cys149 is part of the active site.

The protein belongs to the NAGSA dehydrogenase family. Type 1 subfamily.

It localises to the cytoplasm. It carries out the reaction N-acetyl-L-glutamate 5-semialdehyde + phosphate + NADP(+) = N-acetyl-L-glutamyl 5-phosphate + NADPH + H(+). Its pathway is amino-acid biosynthesis; L-arginine biosynthesis; N(2)-acetyl-L-ornithine from L-glutamate: step 3/4. Its function is as follows. Catalyzes the NADPH-dependent reduction of N-acetyl-5-glutamyl phosphate to yield N-acetyl-L-glutamate 5-semialdehyde. This chain is N-acetyl-gamma-glutamyl-phosphate reductase, found in Thermoanaerobacter sp. (strain X514).